A 298-amino-acid polypeptide reads, in one-letter code: tRNA pseudouridine synthase B (298 aa).

Asp-45 serves as the catalytic Nucleophile.

This sequence belongs to the pseudouridine synthase TruB family. Type 1 subfamily.

The catalysed reaction is uridine(55) in tRNA = pseudouridine(55) in tRNA. In terms of biological role, responsible for synthesis of pseudouridine from uracil-55 in the psi GC loop of transfer RNAs. The protein is tRNA pseudouridine synthase B of Thiobacillus denitrificans (strain ATCC 25259 / T1).